The sequence spans 167 residues: Alanine- and arginine-rich domain-containing protein (167 aa).

The disordered stretch occupies residues 140–167 (LKKRQDQELASKPQSPQDKEMNSECGSA).

Preferentially expressed in testis both in embryo and adult. Expressed at much lower level in other tissues.

In Mus musculus (Mouse), this protein is Alanine- and arginine-rich domain-containing protein (Aard).